We begin with the raw amino-acid sequence, 535 residues long: Glutamate--cysteine ligase (535 aa).

This sequence belongs to the glutamate--cysteine ligase type 1 family. Type 1 subfamily.

It carries out the reaction L-cysteine + L-glutamate + ATP = gamma-L-glutamyl-L-cysteine + ADP + phosphate + H(+). Its pathway is sulfur metabolism; glutathione biosynthesis; glutathione from L-cysteine and L-glutamate: step 1/2. The protein is Glutamate--cysteine ligase of Pseudomonas syringae pv. syringae (strain B728a).